A 498-amino-acid chain; its full sequence is Ribose import ATP-binding protein RbsA (498 aa).

2 consecutive ABC transporter domains span residues L2 to D237 and V247 to Q491. G34 to S41 contacts ATP.

The protein belongs to the ABC transporter superfamily. Ribose importer (TC 3.A.1.2.1) family. As to quaternary structure, the complex is composed of an ATP-binding protein (RbsA), two transmembrane proteins (RbsC) and a solute-binding protein (RbsB).

It localises to the cell membrane. The enzyme catalyses D-ribose(out) + ATP + H2O = D-ribose(in) + ADP + phosphate + H(+). In terms of biological role, part of the ABC transporter complex RbsABC involved in ribose import. Responsible for energy coupling to the transport system. The chain is Ribose import ATP-binding protein RbsA from Deinococcus geothermalis (strain DSM 11300 / CIP 105573 / AG-3a).